Consider the following 464-residue polypeptide: Anthranilate synthase component 1 (464 aa).

L-tryptophan is bound by residues serine 41 and 236-238 (PYM). Residue 271 to 272 (GT) participates in chorismate binding. Residue glutamate 298 coordinates Mg(2+). Residues tyrosine 386, arginine 406, 420–422 (GAG), and glycine 422 contribute to the chorismate site. Glutamate 435 provides a ligand contact to Mg(2+).

This sequence belongs to the anthranilate synthase component I family. In terms of assembly, heterotetramer consisting of two non-identical subunits: a beta subunit (TrpG) and a large alpha subunit (TrpE). It depends on Mg(2+) as a cofactor.

It catalyses the reaction chorismate + L-glutamine = anthranilate + pyruvate + L-glutamate + H(+). It participates in amino-acid biosynthesis; L-tryptophan biosynthesis; L-tryptophan from chorismate: step 1/5. Its activity is regulated as follows. Feedback inhibited by tryptophan. In terms of biological role, part of a heterotetrameric complex that catalyzes the two-step biosynthesis of anthranilate, an intermediate in the biosynthesis of L-tryptophan. In the first step, the glutamine-binding beta subunit (TrpG) of anthranilate synthase (AS) provides the glutamine amidotransferase activity which generates ammonia as a substrate that, along with chorismate, is used in the second step, catalyzed by the large alpha subunit of AS (TrpE) to produce anthranilate. In the absence of TrpG, TrpE can synthesize anthranilate directly from chorismate and high concentrations of ammonia. The polypeptide is Anthranilate synthase component 1 (trpE) (Methanothermobacter thermautotrophicus (strain ATCC 29096 / DSM 1053 / JCM 10044 / NBRC 100330 / Delta H) (Methanobacterium thermoautotrophicum)).